The primary structure comprises 191 residues: GDP-mannose pyrophosphatase (191 aa).

Residues tyrosine 17, 38–40, arginine 67, and 85–87 each bind GDP-alpha-D-mannose; these read KRE and AGL. Positions 43–180 constitute a Nudix hydrolase domain; it reads DRGNGATILL…EIRDGKTVLL (138 aa). The Mg(2+) site is built by alanine 85, glutamate 100, and glutamate 104. The Nudix box signature appears at 86–106; that stretch reads GLLDNDEPEVCIRKEAIEETG. GDP-alpha-D-mannose contacts are provided by residues glutamate 104, glutamate 127, 150 to 151, and lysine 176; that span reads DE. Position 151 (glutamate 151) interacts with Mg(2+).

Belongs to the Nudix hydrolase family. NudK subfamily. In terms of assembly, homodimer. The cofactor is Mg(2+).

The enzyme catalyses GDP-alpha-D-mannose + H2O = alpha-D-mannose 1-phosphate + GMP + 2 H(+). Its function is as follows. Nucleoside diphosphate sugar hydrolase that hydrolyzes GDP-mannose as its preferred substrate, yielding GMP and mannose-1-phosphate. This chain is GDP-mannose pyrophosphatase (nudK), found in Shigella flexneri serotype 5b (strain 8401).